The sequence spans 359 residues: Type-1 angiotensin II receptor A (359 aa).

The Extracellular segment spans residues 1-25; sequence MALNSSAEDGIKRIQDDCPKAGRHS. Asparagine 4 carries N-linked (GlcNAc...) asparagine glycosylation. Residues glutamine 15 and aspartate 17 each contribute to the angiotensin II site. 2 disulfide bridges follow: cysteine 18–cysteine 274 and cysteine 101–cysteine 180. The helical transmembrane segment at 26 to 55 threads the bilayer; sequence YIFVMIPTLYSIIFVVGIFGNSLVVIVIYF. Residues 56-61 lie on the Cytoplasmic side of the membrane; it reads YMKLKT. A helical transmembrane segment spans residues 62 to 89; the sequence is VASVFLLNLALADLCFLLTLPLWAVYTA. The Extracellular portion of the chain corresponds to 90–98; it reads MEYRWPFGN. The chain crosses the membrane as a helical span at residues 99 to 125; the sequence is HLCKIASASVSFNLYASVFLLTCLSID. Residues 126-141 are Cytoplasmic-facing; it reads RYLAIVHPMKSRLRRT. A helical transmembrane segment spans residues 142 to 165; the sequence is MLVAKVTCIIIWLMAGLASLPAVI. The Extracellular segment spans residues 166 to 190; sequence HRNVYFIENTNITVCAFHYESRNST. Arginine 167 is a binding site for angiotensin II. Asparagine 176 carries N-linked (GlcNAc...) asparagine glycosylation. Angiotensin II contacts are provided by phenylalanine 182, histidine 183, and tyrosine 184. Asparagine 188 carries N-linked (GlcNAc...) asparagine glycosylation. The helical transmembrane segment at 191–216 threads the bilayer; the sequence is LPIGLGLTKNILGFLFPFLIILTSYT. Angiotensin II is bound at residue lysine 199. Over 217 to 239 the chain is Cytoplasmic; that stretch reads LIWKALKKAYEIQKNKPRNDDIF. The helical transmembrane segment at 240–268 threads the bilayer; it reads RIIMAIVLFFFFSWVPHQIFTFLDVLIQL. Topologically, residues 269-278 are extracellular; it reads GVIHDCKISD. The helical transmembrane segment at 279-304 threads the bilayer; it reads IVDTAMPITICIAYFNNCLNPLFYGF. Topologically, residues 305 to 359 are cytoplasmic; that stretch reads LGKKFKKYFLQLLKYIPPKAKSHSSLSTKMSTLSYRPSDNMSSSAKKPASCFEVE. The segment covering 337-349 has biased composition (polar residues); that stretch reads LSYRPSDNMSSSA. A disordered region spans residues 337–359; the sequence is LSYRPSDNMSSSAKKPASCFEVE. Cysteine 355 carries S-palmitoyl cysteine lipidation.

It belongs to the G-protein coupled receptor 1 family. In terms of assembly, interacts with MAS1. Interacts with ARRB1. Interacts with FLNA (via filamin repeat 21); increases PKA-mediated phosphorylation of FLNA. C-terminal Ser or Thr residues may be phosphorylated. In terms of tissue distribution, is expressed in the liver, kidney, aorta, lung, uterus, ovary, spleen, heart, adrenal gland, and vascular smooth muscle cell.

It is found in the cell membrane. Receptor for angiotensin II, a vasoconstricting peptide, which acts as a key regulator of blood pressure and sodium retention by the kidney. The activated receptor in turn couples to G-alpha proteins G(q) (GNAQ, GNA11, GNA14 or GNA15) and thus activates phospholipase C and increases the cytosolic Ca(2+) concentrations, which in turn triggers cellular responses such as stimulation of protein kinase C. The sequence is that of Type-1 angiotensin II receptor A (Agtr1) from Rattus norvegicus (Rat).